The following is a 296-amino-acid chain: 33 kDa chaperonin (296 aa).

Cystine bridges form between Cys236–Cys238 and Cys269–Cys272.

The protein belongs to the HSP33 family. In terms of processing, under oxidizing conditions two disulfide bonds are formed involving the reactive cysteines. Under reducing conditions zinc is bound to the reactive cysteines and the protein is inactive.

Its subcellular location is the cytoplasm. Redox regulated molecular chaperone. Protects both thermally unfolding and oxidatively damaged proteins from irreversible aggregation. Plays an important role in the bacterial defense system toward oxidative stress. This chain is 33 kDa chaperonin, found in Lactobacillus acidophilus (strain ATCC 700396 / NCK56 / N2 / NCFM).